The chain runs to 209 residues: Large ribosomal subunit protein uL3 (209 aa).

Residues 133–153 (THGNSLSHRVPGSIGQNQTPG) are disordered. Q150 carries the N5-methylglutamine modification.

This sequence belongs to the universal ribosomal protein uL3 family. As to quaternary structure, part of the 50S ribosomal subunit. Forms a cluster with proteins L14 and L19. Methylated by PrmB.

One of the primary rRNA binding proteins, it binds directly near the 3'-end of the 23S rRNA, where it nucleates assembly of the 50S subunit. This Pectobacterium carotovorum subsp. carotovorum (strain PC1) protein is Large ribosomal subunit protein uL3.